The primary structure comprises 535 residues: CTP synthase (535 aa).

The tract at residues 1–268 (MSTKYIFVTG…DQIVCDHLKL (268 aa)) is amidoligase domain. Ser-14 lines the CTP pocket. Ser-14 lines the UTP pocket. 15-20 (SIGKGI) contacts ATP. Tyr-55 provides a ligand contact to L-glutamine. Residue Asp-72 coordinates ATP. Mg(2+)-binding residues include Asp-72 and Glu-142. CTP contacts are provided by residues 149–151 (DIE), 189–194 (KTKPTQ), and Lys-225. UTP-binding positions include 189–194 (KTKPTQ) and Lys-225. Positions 293 to 535 (KISLVGKYVE…FVTAAVENSN (243 aa)) constitute a Glutamine amidotransferase type-1 domain. Residue Gly-355 coordinates L-glutamine. Cys-382 serves as the catalytic Nucleophile; for glutamine hydrolysis. L-glutamine contacts are provided by residues 383 to 386 (LGMQ), Glu-406, and Arg-464. Catalysis depends on residues His-509 and Glu-511.

This sequence belongs to the CTP synthase family. Homotetramer.

The enzyme catalyses UTP + L-glutamine + ATP + H2O = CTP + L-glutamate + ADP + phosphate + 2 H(+). It catalyses the reaction L-glutamine + H2O = L-glutamate + NH4(+). The catalysed reaction is UTP + NH4(+) + ATP = CTP + ADP + phosphate + 2 H(+). The protein operates within pyrimidine metabolism; CTP biosynthesis via de novo pathway; CTP from UDP: step 2/2. Allosterically activated by GTP, when glutamine is the substrate; GTP has no effect on the reaction when ammonia is the substrate. The allosteric effector GTP functions by stabilizing the protein conformation that binds the tetrahedral intermediate(s) formed during glutamine hydrolysis. Inhibited by the product CTP, via allosteric rather than competitive inhibition. Catalyzes the ATP-dependent amination of UTP to CTP with either L-glutamine or ammonia as the source of nitrogen. Regulates intracellular CTP levels through interactions with the four ribonucleotide triphosphates. The sequence is that of CTP synthase from Streptococcus pneumoniae (strain ATCC BAA-255 / R6).